The following is a 247-amino-acid chain: Cell division protein ZapD (247 aa).

Belongs to the ZapD family. In terms of assembly, interacts with FtsZ.

It localises to the cytoplasm. Cell division factor that enhances FtsZ-ring assembly. Directly interacts with FtsZ and promotes bundling of FtsZ protofilaments, with a reduction in FtsZ GTPase activity. This is Cell division protein ZapD from Salmonella choleraesuis (strain SC-B67).